A 136-amino-acid chain; its full sequence is Protein PsiE (136 aa).

4 helical membrane-spanning segments follow: residues 15-35 (ILQT…VVFL), 55-75 (YELV…ALIV), 82-102 (FHFP…RLII), and 108-128 (PLDV…LWLC).

This sequence belongs to the PsiE family.

The protein resides in the cell inner membrane. The protein is Protein PsiE of Escherichia coli O17:K52:H18 (strain UMN026 / ExPEC).